Reading from the N-terminus, the 180-residue chain is MKTIYFVAGLFVMLVQGSWQRSLQNTEEKSRSFPAPQTDPLDDPDQMTEDKRHSQGTFTSDYSKYLDSRRAQDFVQWLMNTKRNKNNIAKRHDEFERHAEGTFTSDVSSYLEGQAAKEFIAWLVKGRGRRDFPEEVTIVEELRRRHADGSFSDEMNTVLDNLATRDFINWLLHTKITDSL.

The first 20 residues, M1–Q20, serve as a signal peptide directing secretion. Residues N25 to T59 are disordered. The residue at position 54 (S54) is a Phosphoserine. Positions N84 to A89 are excised as a propeptide. S105 and S108 each carry phosphoserine. R127 is subject to Arginine amide. A propeptide spanning residues D131 to R145 is cleaved from the precursor. A phosphoserine mark is found at S150 and S152.

Belongs to the glucagon family. Post-translationally, proglucagon is post-translationally processed in a tissue-specific manner in pancreatic A cells and intestinal L cells. In pancreatic A cells, the major bioactive hormone is glucagon cleaved by PCSK2/PC2. In the intestinal L cells PCSK1/PC1 liberates GLP-1, GLP-2, glicentin and oxyntomodulin. GLP-1 is further N-terminally truncated by post-translational processing in the intestinal L cells resulting in GLP-1(7-37) GLP-1-(7-36)amide. The C-terminal amidation is neither important for the metabolism of GLP-1 nor for its effects on the endocrine pancreas. Glucagon is secreted in the A cells of the islets of Langerhans. GLP-1, GLP-2, oxyntomodulin and glicentin are secreted from enteroendocrine cells throughout the gastrointestinal tract. GLP-1 and GLP-2 are also secreted in selected neurons in the brain.

It localises to the secreted. Functionally, plays a key role in glucose metabolism and homeostasis. Regulates blood glucose by increasing gluconeogenesis and decreasing glycolysis. A counterregulatory hormone of insulin, raises plasma glucose levels in response to insulin-induced hypoglycemia. Plays an important role in initiating and maintaining hyperglycemic conditions in diabetes. Its function is as follows. Potent stimulator of glucose-dependent insulin release. Also stimulates insulin release in response to IL6. Plays important roles on gastric motility and the suppression of plasma glucagon levels. May be involved in the suppression of satiety and stimulation of glucose disposal in peripheral tissues, independent of the actions of insulin. Has growth-promoting activities on intestinal epithelium. May also regulate the hypothalamic pituitary axis (HPA) via effects on LH, TSH, CRH, oxytocin, and vasopressin secretion. Increases islet mass through stimulation of islet neogenesis and pancreatic beta cell proliferation. Inhibits beta cell apoptosis. In terms of biological role, stimulates intestinal growth and up-regulates villus height in the small intestine, concomitant with increased crypt cell proliferation and decreased enterocyte apoptosis. The gastrointestinal tract, from the stomach to the colon is the principal target for GLP-2 action. Plays a key role in nutrient homeostasis, enhancing nutrient assimilation through enhanced gastrointestinal function, as well as increasing nutrient disposal. Stimulates intestinal glucose transport and decreases mucosal permeability. Significantly reduces food intake. Inhibits gastric emptying in humans. Suppression of gastric emptying may lead to increased gastric distension, which may contribute to satiety by causing a sensation of fullness. Functionally, may modulate gastric acid secretion and the gastro-pyloro-duodenal activity. May play an important role in intestinal mucosal growth in the early period of life. This chain is Pro-glucagon (GCG), found in Sus scrofa (Pig).